Consider the following 492-residue polypeptide: uncharacterized protein (492 aa).

The next 12 membrane-spanning stretches (helical) occupy residues 16-36 (FIAF…VMTM), 39-59 (VGPF…GVVL), 107-127 (SFNG…IPVV), 133-153 (IIIG…FISL), 162-182 (AIFY…ILGI), 210-230 (IIFI…LASI), 243-263 (FLIA…IISG), 291-311 (LVGG…NSLA), 350-370 (VLIS…IPFL), 394-414 (MAAA…FMIF), 429-449 (VSYV…LFPF), and 454-474 (VFNT…VGFF).

The protein to M.genitalium MG225.

It localises to the cell membrane. This is an uncharacterized protein from Mycoplasma genitalium (strain ATCC 33530 / DSM 19775 / NCTC 10195 / G37) (Mycoplasmoides genitalium).